Reading from the N-terminus, the 475-residue chain is FAD-dependent monooxygenase spyC (475 aa).

Positions 1-24 (MTAKPPFKVIIVGGSIAGLTLAHC) are cleaved as a signal peptide. Glu-36, Gly-50, Arg-109, Asp-310, and Ala-323 together coordinate FAD. A helical membrane pass occupies residues 444-464 (LLIPFLYPVVAFSLCVLAWIG).

It belongs to the paxM FAD-dependent monooxygenase family. FAD is required as a cofactor.

The protein localises to the membrane. It catalyses the reaction (2E,6E,10E)-geranylgeranyl-triacetate lactone + AH2 + O2 = (S)-(2E,6E,10E)-epoxygeranylgeranyl-triacetate lactone + A + H2O. The protein operates within secondary metabolite biosynthesis; terpenoid biosynthesis. Its function is as follows. FAD-dependent monooxygenase spyC; part of the gene cluster that mediates the biosynthesis of meroterpenoids called sartorypyrones. Within the pathway, spyC catalyzes the epoxidation of geranylgeranyl-triacetate lactone at the terminal olein to yield epoxygeranylgeranyl-triacetate lactone. The biosynthesis of sartorypyrones begins with the production of triacetic acid lactone (TAL) by the NR-PKS spyA using one molecule of acetyl-CoA and two molecules of malonyl-CoA. The prenyltransferase spyF then conjugates geranylgeranyl pyrophosphate (GGPP) to TAL to form geranylgeranyl-triacetate lactone, for which the pathway-specific geranylgeranyl pyrophosphate synthase (GGPS) spyE is required to provide GGPP. Subsequently, geranylgeranyl-triacetate lactone is epoxidized at the terminal olein by the FAD-dependent monooxygenase spyC, followed by cyclization of the terpenoid component catalyzed by the terpene cyclase spyD to produce both the bicyclic sartorypyrone F and the monocyclic sartorypyrone D. Finally, the last step of the biosynthesis involves the acetylation of the meroterpenoids sartorypyrones D and F by the acetyltransferase SpyB to produce sartorypyrones A and G, respectively. This chain is FAD-dependent monooxygenase spyC, found in Aspergillus fumigatus (strain ATCC MYA-4609 / CBS 101355 / FGSC A1100 / Af293) (Neosartorya fumigata).